The following is a 473-amino-acid chain: ATP synthase subunit beta (473 aa).

153-160 (GGAGVGKT) contributes to the ATP binding site.

Belongs to the ATPase alpha/beta chains family. In terms of assembly, F-type ATPases have 2 components, CF(1) - the catalytic core - and CF(0) - the membrane proton channel. CF(1) has five subunits: alpha(3), beta(3), gamma(1), delta(1), epsilon(1). CF(0) has three main subunits: a(1), b(2) and c(9-12). The alpha and beta chains form an alternating ring which encloses part of the gamma chain. CF(1) is attached to CF(0) by a central stalk formed by the gamma and epsilon chains, while a peripheral stalk is formed by the delta and b chains.

It localises to the cell inner membrane. The enzyme catalyses ATP + H2O + 4 H(+)(in) = ADP + phosphate + 5 H(+)(out). Produces ATP from ADP in the presence of a proton gradient across the membrane. The catalytic sites are hosted primarily by the beta subunits. The protein is ATP synthase subunit beta of Rickettsia bellii (strain RML369-C).